The following is a 143-amino-acid chain: Large ribosomal subunit protein uL11 (143 aa).

Belongs to the universal ribosomal protein uL11 family. Part of the ribosomal stalk of the 50S ribosomal subunit. Interacts with L10 and the large rRNA to form the base of the stalk. L10 forms an elongated spine to which L12 dimers bind in a sequential fashion forming a multimeric L10(L12)X complex. One or more lysine residues are methylated.

In terms of biological role, forms part of the ribosomal stalk which helps the ribosome interact with GTP-bound translation factors. The protein is Large ribosomal subunit protein uL11 of Acidovorax ebreus (strain TPSY) (Diaphorobacter sp. (strain TPSY)).